We begin with the raw amino-acid sequence, 99 residues long: ATP-dependent Clp protease adapter protein ClpS (99 aa).

This sequence belongs to the ClpS family. In terms of assembly, binds to the N-terminal domain of the chaperone ClpA.

In terms of biological role, involved in the modulation of the specificity of the ClpAP-mediated ATP-dependent protein degradation. The polypeptide is ATP-dependent Clp protease adapter protein ClpS (Helicobacter hepaticus (strain ATCC 51449 / 3B1)).